A 341-amino-acid chain; its full sequence is Mitochondrial transcription factor 1 (341 aa).

Leu23, Glu77, Asp101, and Asn137 together coordinate S-adenosyl-L-methionine.

It belongs to the class I-like SAM-binding methyltransferase superfamily. rRNA adenine N(6)-methyltransferase family.

Its subcellular location is the mitochondrion. Functionally, mitochondrial transcription factor that confers selective promoter recognition on the core subunit of the yeast mitochondrial RNA polymerase. Interacts with DNA in a non-specific manner. This is Mitochondrial transcription factor 1 (MTF1) from Saccharomyces paradoxus (Yeast).